The primary structure comprises 66 residues: Large ribosomal subunit protein bL35 (66 aa).

A disordered region spans residues 20–40 (GKVKHAQRGKRHGMIKRTKKQ).

The protein belongs to the bacterial ribosomal protein bL35 family.

This is Large ribosomal subunit protein bL35 from Nitrobacter winogradskyi (strain ATCC 25391 / DSM 10237 / CIP 104748 / NCIMB 11846 / Nb-255).